An 89-amino-acid polypeptide reads, in one-letter code: Small ribosomal subunit protein uS15 (89 aa).

Belongs to the universal ribosomal protein uS15 family. In terms of assembly, part of the 30S ribosomal subunit. Forms a bridge to the 50S subunit in the 70S ribosome, contacting the 23S rRNA.

One of the primary rRNA binding proteins, it binds directly to 16S rRNA where it helps nucleate assembly of the platform of the 30S subunit by binding and bridging several RNA helices of the 16S rRNA. Functionally, forms an intersubunit bridge (bridge B4) with the 23S rRNA of the 50S subunit in the ribosome. The polypeptide is Small ribosomal subunit protein uS15 (Bacteroides fragilis (strain ATCC 25285 / DSM 2151 / CCUG 4856 / JCM 11019 / LMG 10263 / NCTC 9343 / Onslow / VPI 2553 / EN-2)).